We begin with the raw amino-acid sequence, 78 residues long: Beta-defensin 12 (78 aa).

Residues 1-27 (MALSRGTFYFGLALFFIVVELPSGSWA) form the signal peptide. 3 cysteine pairs are disulfide-bonded: Cys46/Cys73, Cys53/Cys67, and Cys57/Cys74.

This sequence belongs to the beta-defensin family.

It is found in the secreted. Functionally, has antibacterial activity. This chain is Beta-defensin 12 (Defb12), found in Rattus norvegicus (Rat).